A 455-amino-acid chain; its full sequence is Serine incorporator 2 (455 aa).

The next 11 helical transmembrane spans lie at 5-27, 40-57, 96-118, 131-150, 160-182, 202-224, 239-256, 268-290, 317-339, 385-407, and 422-444; these read LGAC…ILCS, LIFT…IIML, AVYR…MLCV, GFWF…AFYI, FYFG…IDFA, YAGL…ALMF, FISL…AAVL, LLQA…SSIP, QWWD…FISL, TYSY…MTLT, and WTAV…WTLV.

Belongs to the TDE1 family.

The protein localises to the cell membrane. The catalysed reaction is a 1,2-diacyl-sn-glycero-3-phospho-L-serine(in) = a 1,2-diacyl-sn-glycero-3-phospho-L-serine(out). The enzyme catalyses a 1,2-diacyl-sn-glycero-3-phosphocholine(in) = a 1,2-diacyl-sn-glycero-3-phosphocholine(out). It catalyses the reaction a 1,2-diacyl-sn-glycero-3-phosphoethanolamine(in) = a 1,2-diacyl-sn-glycero-3-phosphoethanolamine(out). In terms of biological role, non-ATP-dependent, non-specific lipid transporter for phosphatidylserine, phosphatidylcholine, and phosphatidylethanolamine. Functions as a scramblase that flips lipids in both directions across the membrane. In contrast to SERINC3 and SERINC5, has no effect on HIV-1 particles infectivity. The polypeptide is Serine incorporator 2 (Homo sapiens (Human)).